The following is a 321-amino-acid chain: Gap junction delta-2 protein (321 aa).

At 1–19 (MGEWTILERLLEAAVQQHS) the chain is on the cytoplasmic side. A helical membrane pass occupies residues 20–42 (TMIGRILLTVVVIFRILIVAIVG). Residues 43 to 75 (ETVYDDEQTMFVCNTLQPGCNQACYDRAFPISH) lie on the Extracellular side of the membrane. The helical transmembrane segment at 76-98 (IRYWVFQIIMVCTPSLCFITYSV) threads the bilayer. Topologically, residues 99 to 197 (HQSAKQRERR…KLRRQEGISR (99 aa)) are cytoplasmic. A disordered region spans residues 118-141 (RDPPESIGGPGGTGGGGSGGGKRE). Residues 125–137 (GGPGGTGGGGSGG) show a composition bias toward gly residues. The helical transmembrane segment at 198–220 (FYIIQVVFRNALEIGFLVGQYFL) threads the bilayer. The Extracellular segment spans residues 221–252 (YGFSVPGLYECNRYPCIKEVECYVSRPTEKTV). The chain crosses the membrane as a helical span at residues 253–275 (FLVFMFAVSGICVVLNLAELNHL). Residues 276-321 (GWRKIKLAVRGAQAKRKSIYEIRNKDLPRVSVPNFGRTQSSDSAYV) lie on the Cytoplasmic side of the membrane.

Belongs to the connexin family. Delta-type subfamily. In terms of assembly, a connexon is composed of a hexamer of connexins. In terms of tissue distribution, highly expressed in neurons.

The protein localises to the cell membrane. It is found in the cell junction. Its subcellular location is the gap junction. Functionally, one gap junction consists of a cluster of closely packed pairs of transmembrane channels, the connexons, through which materials of low MW diffuse from one cell to a neighboring cell. The chain is Gap junction delta-2 protein (GJD2) from Homo sapiens (Human).